A 448-amino-acid polypeptide reads, in one-letter code: MRFDPREIGEVLEMLLFRELDIRAVTLSVNTLPAIRPNLKDTLDALSHLLEPYARRLRPAAEKVASKLGVRIVTVRLAVSPTSIMLEPLGDAKAAVEIAAFLDKLAGRHGVDMVGGFSAFVHGGVSRGAAALIESLAEALNSTERVAGFLNAASTMTGINLEAVRRAARIVLSLKPHAAARFAVTSNLPEDVPFMPGAYHGLGQPDAVVNIAVSGPGVIEAVVRSLPDADVRTLHDAIKRAAFKITRLGELVGREVAKELGVAFGAVDLSVAPSPKVGDSVAAVLEAMGLPRVGAPGSVFALALFTDAVKKGGAMAASTIGGLSGAFIPVSEDAVMAQAAAEGAITLDGLKAMAAVCNTGLDMVGIPADVGPDVVAAIIADVMALAVHLDKPLGVRLIPVPGARPGDFYDLGGLYGRVAVVDASRYSRIPLVARPGTAPPGVERLKKG.

Belongs to the UPF0210 family.

The sequence is that of UPF0210 protein Pars_1033 from Pyrobaculum arsenaticum (strain DSM 13514 / JCM 11321 / PZ6).